A 669-amino-acid polypeptide reads, in one-letter code: Trifunctional UDP-glucose 4,6-dehydratase/UDP-4-keto-6-deoxy-D-glucose 3,5-epimerase/UDP-4-keto-L-rhamnose-reductase RHM1 (669 aa).

13-19 (GAAGFIA) lines the NAD(+) pocket. Residue Thr-132 coordinates substrate. The Proton donor role is filled by Asp-133. Residues Glu-134 and Tyr-159 each act as proton acceptor in the active site. 391–397 (GKTGWIG) provides a ligand contact to NADP(+).

The protein in the N-terminal section; belongs to the NAD(P)-dependent epimerase/dehydratase family. dTDP-glucose dehydratase subfamily. It in the C-terminal section; belongs to the dTDP-4-dehydrorhamnose reductase family. NAD(+) is required as a cofactor. The cofactor is NADP(+). In terms of tissue distribution, expressed in roots, stems, leaves, seedlings, inflorescence tips, and siliques. Detected in the adaxial side of cotyledons, in the emerging leaves and in trichomes. Also detected in the root tip, more precisely in the epidermal cells in the meristematic and elongation zone.

The protein localises to the cytoplasm. Its subcellular location is the cytosol. It carries out the reaction UDP-alpha-D-glucose = UDP-4-dehydro-6-deoxy-alpha-D-glucose + H2O. It participates in carbohydrate biosynthesis. Its function is as follows. Trifunctional enzyme involved in UDP-beta-L-rhamnose biosynthesis, a precursor of the primary cell wall components rhamnogalacturonan I (RG-I) and rhamnogalacturonan II (RG-II). Plays a major role in supplying UDP-rhamnose for flavonol biosynthesis. Catalyzes the dehydration of UDP-glucose to form UDP-4-dehydro-6-deoxy-D-glucose followed by the epimerization of the C3' and C5' positions of UDP-4-dehydro-6-deoxy-D-glucose to form UDP-4-keto-beta-L-rhamnose and the reduction of UDP-4-keto-beta-L-rhamnose to yield UDP-beta-L-rhamnose. The sequence is that of Trifunctional UDP-glucose 4,6-dehydratase/UDP-4-keto-6-deoxy-D-glucose 3,5-epimerase/UDP-4-keto-L-rhamnose-reductase RHM1 from Arabidopsis thaliana (Mouse-ear cress).